The following is a 440-amino-acid chain: Enolase (440 aa).

(2R)-2-phosphoglycerate is bound at residue Gln-168. Glu-210 (proton donor) is an active-site residue. The Mg(2+) site is built by Asp-249, Glu-300, and Asp-326. Lys-351, Arg-380, Ser-381, and Lys-402 together coordinate (2R)-2-phosphoglycerate. The active-site Proton acceptor is the Lys-351.

This sequence belongs to the enolase family. It depends on Mg(2+) as a cofactor.

The protein resides in the cytoplasm. Its subcellular location is the secreted. It is found in the cell surface. It catalyses the reaction (2R)-2-phosphoglycerate = phosphoenolpyruvate + H2O. Its pathway is carbohydrate degradation; glycolysis; pyruvate from D-glyceraldehyde 3-phosphate: step 4/5. Functionally, catalyzes the reversible conversion of 2-phosphoglycerate (2-PG) into phosphoenolpyruvate (PEP). It is essential for the degradation of carbohydrates via glycolysis. This Ureaplasma parvum serovar 3 (strain ATCC 27815 / 27 / NCTC 11736) protein is Enolase.